The following is an 837-amino-acid chain: Ribosome biogenesis ATPase RIX7 (837 aa).

2 disordered regions span residues 36-56 (RSLR…EEDE) and 149-207 (ITST…LKSL). Residue Ser42 is modified to Phosphoserine. Residues 43-56 (QGEEGENNEGEEDE) are compositionally biased toward acidic residues. The segment covering 149-163 (ITSTWSKSGSVSESI) has biased composition (polar residues). Residues 176-192 (KSKKRSKEGTCKVKRQK) show a composition bias toward basic residues. 246 to 253 (GPPGCGKT) lines the ATP pocket. The disordered stretch occupies residues 443–468 (PTTATDSSEDNMEIDETANGDESSLK). Residues 449–461 (SSEDNMEIDETAN) show a composition bias toward acidic residues. 574–581 (GPPGCGKT) serves as a coordination point for ATP.

This sequence belongs to the AAA ATPase family.

It is found in the nucleus. The protein localises to the nucleolus. Involved in ribosome biogenesis. Seems to be required for restructuring nucleoplasmic 60S pre-ribosomal particles to make them competent for nuclear export. The sequence is that of Ribosome biogenesis ATPase RIX7 (RIX7) from Saccharomyces cerevisiae (strain ATCC 204508 / S288c) (Baker's yeast).